The following is a 468-amino-acid chain: Ribulose bisphosphate carboxylase large chain (468 aa).

Position 4 is an N6,N6,N6-trimethyllysine (Lys-4). The substrate site is built by Asn-113 and Thr-163. Residue Lys-165 is the Proton acceptor of the active site. A substrate-binding site is contributed by Lys-167. Lys-191, Asp-193, and Glu-194 together coordinate Mg(2+). Position 191 is an N6-carboxylysine (Lys-191). The Proton acceptor role is filled by His-284. Substrate-binding residues include Arg-285, His-317, and Ser-369.

The protein belongs to the RuBisCO large chain family. Type I subfamily. In terms of assembly, heterohexadecamer of 8 large chains and 8 small chains; disulfide-linked. The disulfide link is formed within the large subunit homodimers. Requires Mg(2+) as cofactor. In terms of processing, the disulfide bond which can form in the large chain dimeric partners within the hexadecamer appears to be associated with oxidative stress and protein turnover.

It localises to the plastid. The protein localises to the chloroplast. The enzyme catalyses 2 (2R)-3-phosphoglycerate + 2 H(+) = D-ribulose 1,5-bisphosphate + CO2 + H2O. It carries out the reaction D-ribulose 1,5-bisphosphate + O2 = 2-phosphoglycolate + (2R)-3-phosphoglycerate + 2 H(+). In terms of biological role, ruBisCO catalyzes two reactions: the carboxylation of D-ribulose 1,5-bisphosphate, the primary event in carbon dioxide fixation, as well as the oxidative fragmentation of the pentose substrate in the photorespiration process. Both reactions occur simultaneously and in competition at the same active site. This chain is Ribulose bisphosphate carboxylase large chain, found in Pandorea jasminoides (Bower vine).